The sequence spans 369 residues: Bi-functional coumaroyl CoA and feruloyl CoA ortho-hydroxylase Diox1 (369 aa).

Residues Ile209–Pro319 form the Fe2OG dioxygenase domain. Position 225 (Tyr225) interacts with 2-oxoglutarate. Fe cation is bound by residues His240, Asp242, and His300. 2-oxoglutarate is bound by residues Arg310 and Ser312.

It belongs to the iron/ascorbate-dependent oxidoreductase family. It depends on L-ascorbate as a cofactor. Fe(2+) serves as cofactor.

It carries out the reaction (E)-4-coumaroyl-CoA + 2-oxoglutarate + O2 = (E)-2,4-dihydroxycinnamoyl-CoA + succinate + CO2. It catalyses the reaction (E)-feruloyl-CoA + 2-oxoglutarate + O2 = (E)-6-hydroxyferuloyl-CoA + succinate + CO2. It participates in phenylpropanoid metabolism. 2-oxoglutarate (OG)- and Fe(II)-dependent dioxygenase (2OGD) involved in scopoletin and umbelliferone biosynthesis. Converts feruloyl CoA into 6'-hydroxyferuloyl CoA, and p-coumaroyl CoA into 2,4-dihydroxycinnamoyl-CoA. The sequence is that of Bi-functional coumaroyl CoA and feruloyl CoA ortho-hydroxylase Diox1 from Ruta graveolens (Common rue).